The primary structure comprises 163 residues: Lectin-like protein EP153R (163 aa).

Residues 1–26 (MFSNKKYIGLINKKEGLKKKIDDYSI) are Cytoplasmic-facing. Residues 27–47 (LIIGILIGTNILSLIINIIGE) traverse the membrane as a helical segment. Residues 48–163 (INKPICYQNN…YTDLLFICSK (116 aa)) are Extracellular-facing. Residues cysteine 63 and cysteine 74 are joined by a disulfide bond. A lectin-like region spans residues 63–162 (CPKDWVGYNN…HYTDLLFICS (100 aa)). N-linked (GlcNAc...) asparagine; by host glycans are attached at residues asparagine 84, asparagine 96, asparagine 97, asparagine 103, asparagine 109, asparagine 115, asparagine 129, and asparagine 135. Cysteine 92 and cysteine 161 are disulfide-bonded.

It belongs to the asfivirus lectin-like protein family. As to quaternary structure, homodimer.

The protein localises to the host endoplasmic reticulum membrane. Functionally, down-regulates MHC-I expression by impairing the appropriate configuration or presentation into the plasma membrane of the latter. Participates in viral hemadsorption, which may help viral spread. Reduces the transactivating activity of host TP53, thus inhibiting apoptosis. Non-essential for virus growth in swine macrophage cell cultures. The sequence is that of Lectin-like protein EP153R from African swine fever virus (isolate Warthog/Namibia/Wart80/1980) (ASFV).